The primary structure comprises 623 residues: Glutamine--fructose-6-phosphate aminotransferase [isomerizing] (623 aa).

C2 serves as the catalytic Nucleophile; for GATase activity. The region spanning 2–228 (CGIVGYIGQA…NDQVVTITAD (227 aa)) is the Glutamine amidotransferase type-2 domain. SIS domains lie at 295-435 (IDES…LRGN) and 468-613 (LGRS…VDQP). Catalysis depends on K618, which acts as the For Fru-6P isomerization activity.

As to quaternary structure, homodimer.

The protein resides in the cytoplasm. The enzyme catalyses D-fructose 6-phosphate + L-glutamine = D-glucosamine 6-phosphate + L-glutamate. Functionally, catalyzes the first step in hexosamine metabolism, converting fructose-6P into glucosamine-6P using glutamine as a nitrogen source. The sequence is that of Glutamine--fructose-6-phosphate aminotransferase [isomerizing] from Corynebacterium efficiens (strain DSM 44549 / YS-314 / AJ 12310 / JCM 11189 / NBRC 100395).